The sequence spans 891 residues: MKLYTHKINRIVDGYLDNLNKFGLNYMFEQDLIKITLDLGIPNNNIKFYNLNNSNSNSNNNNNNNNNNNNNNNNNNNNNNNNNNNNSNNSNNINNKNDILYNIIIEEKIDLIIFYKSIFSENANNISKTFNNLTTIIINDNIISNTNNNNNNNNKFYEINYPFKISTLLSGYISGLISETNIIGYLKTNKIQDQTLLDTFYFGARLSNPMVKLMFYTIDYDFKNASNNNFPFQEIIELSVSSLLKNGVDLISSSFENNEYLTFCNILLKQNIKIIGSNGFLISPPLNKDHVLFNSVYNLTLYILPIISNLINNTNTNNNNNTNNNESTNSQFNINLIFNPSISNLIINNINSNLSMIENQILNDTNIILTNQLNNESIIDLGIISGYILFKPISKTIEYGITIVSSILIGALIIIQICIIKYKNKPSFKSASPTFLIFIVIGGIFVYIGVIIWVSGVNVFTCNAKFWLISLGLTTMIGGIVVKNFRIWLIFDNPKLYHIKITNLQLLPWVLGMFLLNVFLLSLITGLGKLTPFKVFPNDEKFSSYEIQCEMMDGGLIALYFLLGYFAIIVMIGIFVSWKIRIVDIEEFNESKSVAYSLYSIVFCLLIIAPLTISKTGHNTEILCSGFIFIVAAIITIMFIPKFWALKIYGAEGSNEIFRQSSSSTSKRKNKSSTTNDPTNLDSISKKSSKNAPKRVNLFLYDFTDDDEESKQSSSSSKGDTIECMDVFTFIESVQPNSEAANEMTYNDDPTYTEPSEQPTYTESSEQPNPTPRTLTATPRTNDLTTPRTNDLTTPRTNDLITPRTNDLSTPRTNDLNTPRTDGILTPRSINSLATPRVEEPMSPRQYHNMMITLSPILEEENIVVVEKDEVIENSDSESESSDSNSDSIIQ.

Residues 1 to 399 (MKLYTHKINR…FKPISKTIEY (399 aa)) lie on the Extracellular side of the membrane. N-linked (GlcNAc...) asparagine glycosylation is found at Asn-52, Asn-85, Asn-88, Asn-125, Asn-132, Asn-224, Asn-298, Asn-312, Asn-320, Asn-325, Asn-353, Asn-363, and Asn-375. The interval 52-91 (NNSNSNSNNNNNNNNNNNNNNNNNNNNNNNNNNNNSNNSN) is disordered. A helical transmembrane segment spans residues 400 to 420 (GITIVSSILIGALIIIQICII). Residues 421-433 (KYKNKPSFKSASP) lie on the Cytoplasmic side of the membrane. Residues 434 to 454 (TFLIFIVIGGIFVYIGVIIWV) form a helical membrane-spanning segment. Residues 455-461 (SGVNVFT) lie on the Extracellular side of the membrane. The helical transmembrane segment at 462–482 (CNAKFWLISLGLTTMIGGIVV) threads the bilayer. The Cytoplasmic portion of the chain corresponds to 483 to 505 (KNFRIWLIFDNPKLYHIKITNLQ). Residues 506–526 (LLPWVLGMFLLNVFLLSLITG) traverse the membrane as a helical segment. The Extracellular segment spans residues 527 to 555 (LGKLTPFKVFPNDEKFSSYEIQCEMMDGG). Residues 556-576 (LIALYFLLGYFAIIVMIGIFV) traverse the membrane as a helical segment. At 577–592 (SWKIRIVDIEEFNESK) the chain is on the cytoplasmic side. Residues 593 to 613 (SVAYSLYSIVFCLLIIAPLTI) traverse the membrane as a helical segment. Over 614 to 625 (SKTGHNTEILCS) the chain is Extracellular. A helical membrane pass occupies residues 626–646 (GFIFIVAAIITIMFIPKFWAL). Residues 647-891 (KIYGAEGSNE…SDSNSDSIIQ (245 aa)) are Cytoplasmic-facing. Disordered regions lie at residues 660-689 (QSSS…KKSS), 742-827 (NEMT…ILTP), and 869-891 (DEVI…SIIQ). A compositionally biased stretch (polar residues) spans 742-767 (NEMTYNDDPTYTEPSEQPTYTESSEQ). Positions 772 to 782 (PRTLTATPRTN) are enriched in low complexity. The segment covering 783 to 820 (DLTTPRTNDLTTPRTNDLITPRTNDLSTPRTNDLNTPR) has biased composition (polar residues). Residues 872 to 881 (IENSDSESES) are compositionally biased toward acidic residues. The span at 882 to 891 (SDSNSDSIIQ) shows a compositional bias: low complexity.

This sequence belongs to the G-protein coupled receptor 3 family. GABA-B receptor subfamily.

The protein localises to the membrane. The polypeptide is Metabotropic glutamate receptor-like protein N (grlN) (Dictyostelium discoideum (Social amoeba)).